The following is a 171-amino-acid chain: tRNA-specific adenosine deaminase (171 aa).

Residues 6–133 (EEQTYFMQEA…ERLNHRVQVE (128 aa)) enclose the CMP/dCMP-type deaminase domain. Position 57 (histidine 57) interacts with Zn(2+). The Proton donor role is filled by glutamate 59. Residues cysteine 87 and cysteine 90 each contribute to the Zn(2+) site.

The protein belongs to the cytidine and deoxycytidylate deaminase family. Homodimer. Requires Zn(2+) as cofactor.

The catalysed reaction is adenosine(34) in tRNA + H2O + H(+) = inosine(34) in tRNA + NH4(+). Catalyzes the deamination of adenosine to inosine at the wobble position 34 of tRNA(Arg2). The sequence is that of tRNA-specific adenosine deaminase from Streptococcus pyogenes serotype M3 (strain ATCC BAA-595 / MGAS315).